The primary structure comprises 142 residues: HTH-type transcriptional regulator MntR (142 aa).

One can recognise an HTH dtxR-type domain in the interval 1-63; it reads MPTPSMEDYI…YEKYRGLILT (63 aa). Positions 8, 11, 77, 99, 102, and 103 each coordinate Mn(2+).

This sequence belongs to the DtxR/MntR family. As to quaternary structure, homodimer.

It is found in the cytoplasm. DNA binding is strongly activated by Mn(2+). In terms of biological role, central regulator of manganese homeostasis. This chain is HTH-type transcriptional regulator MntR, found in Listeria welshimeri serovar 6b (strain ATCC 35897 / DSM 20650 / CCUG 15529 / CIP 8149 / NCTC 11857 / SLCC 5334 / V8).